A 90-amino-acid chain; its full sequence is Small ribosomal subunit protein uS15c (90 aa).

This sequence belongs to the universal ribosomal protein uS15 family. In terms of assembly, part of the 30S ribosomal subunit.

The protein resides in the plastid. It is found in the chloroplast. This chain is Small ribosomal subunit protein uS15c (rps15), found in Populus alba (White poplar).